A 782-amino-acid polypeptide reads, in one-letter code: E3 ubiquitin-protein ligase SopA (782 aa).

The disordered stretch occupies residues 136–171 (GVSVSANNRPTVSEGRTPPVSPSLSLQATSSPSSPA). A compositionally biased stretch (low complexity) spans 157–171 (PSLSLQATSSPSSPA). The active-site Glycyl thioester intermediate is the Cys-753.

It belongs to the SopA E3 ligase family. In terms of processing, ubiquitinated in the presence of host E1 ubiquitin-activating enzyme, E2 ubiquitin-conjugating enzyme and ubiquitin.

The protein localises to the secreted. It localises to the host cell. It carries out the reaction S-ubiquitinyl-[E2 ubiquitin-conjugating enzyme]-L-cysteine + [acceptor protein]-L-lysine = [E2 ubiquitin-conjugating enzyme]-L-cysteine + N(6)-ubiquitinyl-[acceptor protein]-L-lysine.. Effector proteins function to alter host cell physiology and promote bacterial survival in host tissues. This protein is an E3 ubiquitin ligase that interferes with host's ubiquitination pathway. For instance, prevents host innate immune response by ubiquitinating and thus sending to degradation host E3 ubiquitin ligases TRIM56 and TRIM65. This is E3 ubiquitin-protein ligase SopA (sopA) from Salmonella typhimurium (strain D23580).